A 183-amino-acid polypeptide reads, in one-letter code: MTFGHCRRASTLRSAFVLGLCGLLLAGCSGADDDRDAAALKDKYVTVNLGVRGPVDLPADGVGNLQTFSPQQIYAGKKLFESNCQNCHVGGTTTPNPKVSLALAKLQGATPPRDNIQSLVQYMRLPMSYDGSEETFNCRKSDWIEDDEAQNLAAFILRASQKARGWGTARLEANQDSMTTAPP.

A signal peptide spans 1–31; it reads MTFGHCRRASTLRSAFVLGLCGLLLAGCSGA. C84, C87, H88, and C138 together coordinate heme c.

The protein belongs to the cytochrome c family. PsbV subfamily. As to quaternary structure, PSII is composed of 1 copy each of membrane proteins PsbA, PsbB, PsbC, PsbD, PsbE, PsbF, PsbH, PsbI, PsbJ, PsbK, PsbL, PsbM, PsbT, PsbX, Psb30/Ycf12, peripheral proteins PsbO, CyanoQ (PsbQ), PsbU, PsbV and a large number of cofactors. It forms dimeric complexes. It depends on heme c as a cofactor.

Its subcellular location is the cell inner membrane. Its function is as follows. Probably one of the extrinsic, lumenal subunits of photosystem II (PSII). PSII is a light-driven water plastoquinone oxidoreductase, using light energy to abstract electrons from H(2)O, generating a proton gradient subsequently used for ATP formation. The extrinsic proteins stabilize the structure of photosystem II oxygen-evolving complex (OEC), the ion environment of oxygen evolution and protect the OEC against heat-induced inactivation. Low-potential cytochrome c that plays a role in the OEC of PSII. This is Photosystem II extrinsic protein V (psbV1) from Gloeobacter violaceus (strain ATCC 29082 / PCC 7421).